The sequence spans 302 residues: MSIKILSESEIKQVANSYQAPAVLFANPKNLYQRRAKRLRDLAQNHPLSDYLLFAADIVESQLSTLEKNPLPPQQLEQLNAIEPLNTKTFKRDSIWREYLTEILDEIKPKANEQIAATIEFLEKASFAELEEMANKLLTQEFNLVSSDKAVFIWAALSLYWLQAAQQIPHNSQVENTENLHHCPVCGSLPVASIVQIGTSQGLRYLHCNLCESEWNLVRAQCTNCNSHDKLEIWSLNEELALVRAETCGSCESYLKMMFQEKDPYVEPVADDLASIFLDIEMEEKGFARSGLNPFIFPAEEA.

Belongs to the FdhE family.

It localises to the cytoplasm. Necessary for formate dehydrogenase activity. The protein is Protein FdhE homolog of Haemophilus influenzae (strain PittGG).